An 875-amino-acid polypeptide reads, in one-letter code: MPSAGSVNAANPAVDTSAQTGRYDPTALEQRWQESWKADGVDTTEVGGEKPGFFALSMFPYPSGSLHMGHVRNYVITDVIARVQRMLGHAVLHPMGWDAFGLPAENAAIERNVDPGEWTDRNIDQMRAQLDRLGLSIDWSREQATCHSDYYRWTQWLFLELLEGGLAYRKNATVNWDPVDQTVLANEQVDGDGRSWRSGALVEQRQLNQWFLRITDYAEPLLNDLDALKGWPERVRTMQANWIGRSEGAEISFNVEGAQNQTITVFTTRPDTLAGASYVVLAPENELVDSLSSEEQKDTVEAFRKEVARLSTIERTCDDRPKRGVPIGSHVINPLTGVVLPVWIADYVLAEYGTGAVMGVPAHDQRDIAFAQSNGLPIQQVIDAEGAAEAIAAGQAWTDAGTLVNSGSFDGTASSEAKGAITGHGAEQGWARSKVTYRLRDWLISRQRYWGCPIPVIHCDNCGAVPVPREDLPVELPRGIDLSGKGGSPLSQQSDWVNVACPRCGKPAKRETDTMDTFMCSSWYFLRFADPHNTEKPFSKEAVNRWLPVKQYVGGIEHAILHLLYARFFTKALKDRGLIDINEPFERLLTQGMVQGVTYRNATTGKYIAPADVADAEDPRDPNTGDKLEVLFEKMSKSKYNGVDPAAVIDRYGADTARMFILFKAPPEKDLEWDDADVEGQFRFLQRLWRLVEAGSARIDSLEPMQRPADLSDADSDVRRALHLAIEAVSEDLSDEIQLNTAISELMKLSNAISSTGIDALSAPVLQEALSGLVRLLAPFAPHLAEEFWNRLGGSGSVHRQSWPVLDPTALVQDSVEVVIQVKGKVRGKLQVPASAGKEELERLALASDVAEKWLEGAAPRRVIVVPGKLVNLVP.

The segment covering 1-20 (MPSAGSVNAANPAVDTSAQT) has biased composition (polar residues). The disordered stretch occupies residues 1–22 (MPSAGSVNAANPAVDTSAQTGR). Positions 60 to 70 (PYPSGSLHMGH) match the 'HIGH' region motif. The 'KMSKS' region motif lies at 634–638 (KMSKS). Residue Lys637 coordinates ATP.

Belongs to the class-I aminoacyl-tRNA synthetase family.

The protein resides in the cytoplasm. The catalysed reaction is tRNA(Leu) + L-leucine + ATP = L-leucyl-tRNA(Leu) + AMP + diphosphate. The sequence is that of Leucine--tRNA ligase from Synechococcus sp. (strain CC9605).